The primary structure comprises 372 residues: MFQFEIQATCSNTGARCGCFHTPHGPVTTPRFMPVGTLGTVKGVTTSQLAETGAQMVLSNTYHLHLQPGEEIVADAGGLHRFMGWDGPMLTDSGGFQVFSLGDLNRIDDEGVDFRNPRNGSRILLTPERSMQIQMRLGADVAMAFDQCPPYPATENDVAEACRRTHAWLGRCADAHQRDDQALFGIVQGGCFPHLRDLSARTVASFNLPGIAIGGVSVGEPVEEMHQIVRQVTPLLPADRPRYLMGIGTLREMAVAVANGIDMFDCVLPTRLGRHGTALVGGERWNLRNARFRHDHTPLDPNCPCIACRQHTRAYLHHLIRSEELLGLTLLSIHNLTHLIRFTTAMGQAIRDGCFSEDFAPWEPSSRAHHTW.

The active-site Proton acceptor is Asp92. Substrate-binding positions include 92 to 96 (DSGGF), Asp146, Gln188, and Gly215. An RNA binding region spans residues 246-252 (GIGTLRE). Asp265 acts as the Nucleophile in catalysis. An RNA binding; important for wobble base 34 recognition region spans residues 270–274 (TRLGR). Positions 303, 305, 308, and 334 each coordinate Zn(2+).

It belongs to the queuine tRNA-ribosyltransferase family. As to quaternary structure, homodimer. Within each dimer, one monomer is responsible for RNA recognition and catalysis, while the other monomer binds to the replacement base PreQ1. Requires Zn(2+) as cofactor.

The catalysed reaction is 7-aminomethyl-7-carbaguanine + guanosine(34) in tRNA = 7-aminomethyl-7-carbaguanosine(34) in tRNA + guanine. It functions in the pathway tRNA modification; tRNA-queuosine biosynthesis. Its function is as follows. Catalyzes the base-exchange of a guanine (G) residue with the queuine precursor 7-aminomethyl-7-deazaguanine (PreQ1) at position 34 (anticodon wobble position) in tRNAs with GU(N) anticodons (tRNA-Asp, -Asn, -His and -Tyr). Catalysis occurs through a double-displacement mechanism. The nucleophile active site attacks the C1' of nucleotide 34 to detach the guanine base from the RNA, forming a covalent enzyme-RNA intermediate. The proton acceptor active site deprotonates the incoming PreQ1, allowing a nucleophilic attack on the C1' of the ribose to form the product. After dissociation, two additional enzymatic reactions on the tRNA convert PreQ1 to queuine (Q), resulting in the hypermodified nucleoside queuosine (7-(((4,5-cis-dihydroxy-2-cyclopenten-1-yl)amino)methyl)-7-deazaguanosine). In Synechococcus sp. (strain CC9311), this protein is Queuine tRNA-ribosyltransferase.